The primary structure comprises 370 residues: tRNA-specific 2-thiouridylase MnmA (370 aa).

Residues 9–16 and M35 each bind ATP; that span reads GLSGGVDS. The interaction with target base in tRNA stretch occupies residues 95–97; the sequence is NPD. C100 functions as the Nucleophile in the catalytic mechanism. A disulfide bridge connects residues C100 and C198. Residue G124 coordinates ATP. The segment at 148–150 is interaction with tRNA; the sequence is KDQ. C198 acts as the Cysteine persulfide intermediate in catalysis. Residues 316 to 317 form an interaction with tRNA region; sequence RY.

This sequence belongs to the MnmA/TRMU family.

Its subcellular location is the cytoplasm. It catalyses the reaction S-sulfanyl-L-cysteinyl-[protein] + uridine(34) in tRNA + AH2 + ATP = 2-thiouridine(34) in tRNA + L-cysteinyl-[protein] + A + AMP + diphosphate + H(+). Its function is as follows. Catalyzes the 2-thiolation of uridine at the wobble position (U34) of tRNA, leading to the formation of s(2)U34. The sequence is that of tRNA-specific 2-thiouridylase MnmA from Acidovorax ebreus (strain TPSY) (Diaphorobacter sp. (strain TPSY)).